A 247-amino-acid polypeptide reads, in one-letter code: Cell division protein ZapD (247 aa).

The protein belongs to the ZapD family. In terms of assembly, interacts with FtsZ.

It is found in the cytoplasm. Its function is as follows. Cell division factor that enhances FtsZ-ring assembly. Directly interacts with FtsZ and promotes bundling of FtsZ protofilaments, with a reduction in FtsZ GTPase activity. This chain is Cell division protein ZapD, found in Shigella flexneri.